The primary structure comprises 705 residues: MSEQKAFNLKIDEQNIAWLGIDVPNEKMNTLQAAFADEMKAIFAQLKDSSGLKGLIVHSLKPDNFVAGADVRMLEACKTAPEAEALARQGQELFQQLSDLPYPVVAAIHGPCLGGGLELALACDFRVCSDDDATRLGLPEVQLGLLPGSGGTQRLPRLIGLLPSLDLILTGKQLRANKAKKLGVVDACVPQTILLDVAKQFVEKGKKRAKQKVTTKEKLLSGSGLGRKFVFEQAAKKTHEKTRGNYPATVAILQVIQHGLEKGMKQGLELEAKRFGELVMSNESKALRSIFFATTEMKKETGSEAKPSKVGMVGVLGGGLMGAGISHVSVAKAKVPVRIKDVSNDGVLNALKYNYKLFDKQRKRRILSKAQLQSKMLQLSGGTDFTSFNRTDVVIEAVFEDLSLKQQMVADIEANAKPETIFATNTSSLPIHKIAEKAQRPENIVGLHYFSPVEKMPLVEVIPHESTSEETIATVVALAKKQGKTPIVVKDQAGFYVNRILAPYMNESAHILLANEPIDKIDTALLDFGFPVGPITLLDEVGVDIGAKIMPILVAELGARFKGPDVFDVLLNDGRKGRKSGKGFYTYKGKKKEVDKSVYKLLKLTPESKLSDNDIALRCVLPMLNEAVRCLDDGIIRSPRDGDIGAIFGIGFPPFLGGPFRYMDQFGLKELVEKMNQFAEKYGDRFAPCDGLLTRAGEGRRFYDN.

Residues 1-190 (MSEQKAFNLK…KLGVVDACVP (190 aa)) form an enoyl-CoA hydratase region. A 3-hydroxyacyl-CoA dehydrogenase region spans residues 308 to 705 (SKVGMVGVLG…AGEGRRFYDN (398 aa)).

In the N-terminal section; belongs to the enoyl-CoA hydratase/isomerase family. It in the central section; belongs to the 3-hydroxyacyl-CoA dehydrogenase family. Heterotetramer of two alpha chains (FadJ) and two beta chains (FadI).

The protein localises to the cytoplasm. It catalyses the reaction a (3S)-3-hydroxyacyl-CoA = a (2E)-enoyl-CoA + H2O. The catalysed reaction is a 4-saturated-(3S)-3-hydroxyacyl-CoA = a (3E)-enoyl-CoA + H2O. It carries out the reaction a (3S)-3-hydroxyacyl-CoA + NAD(+) = a 3-oxoacyl-CoA + NADH + H(+). The enzyme catalyses (3S)-3-hydroxybutanoyl-CoA = (3R)-3-hydroxybutanoyl-CoA. The protein operates within lipid metabolism; fatty acid beta-oxidation. Catalyzes the formation of a hydroxyacyl-CoA by addition of water on enoyl-CoA. Also exhibits 3-hydroxyacyl-CoA epimerase and 3-hydroxyacyl-CoA dehydrogenase activities. The chain is Fatty acid oxidation complex subunit alpha from Vibrio vulnificus (strain CMCP6).